The following is a 532-amino-acid chain: Deoxyribodipyrimidine photo-lyase (532 aa).

A disordered region spans residues 1 to 57 (MDSKKRSHSTGGEAENMESQESKAKRKPLQKHQFSKSNVVQKEEKDKTEGEEKGAEG). Residues 24 to 34 (AKRKPLQKHQF) are compositionally biased toward basic residues. Basic and acidic residues predominate over residues 41–55 (QKEEKDKTEGEEKGA). One can recognise a Photolyase/cryptochrome alpha/beta domain in the interval 97 to 229 (QAFVYWMSRD…QVDAHNIVPC (133 aa)). R322 provides a ligand contact to DNA. Interaction with DNA stretches follow at residues 368–376 (EAVVRRELA) and 442–443 (GF). 468–470 (YLN) serves as a coordination point for FAD.

It belongs to the DNA photolyase class-2 family. FAD serves as cofactor.

It catalyses the reaction cyclobutadipyrimidine (in DNA) = 2 pyrimidine residues (in DNA).. Its function is as follows. Involved in repair of UV radiation-induced DNA damage. Catalyzes the light-dependent monomerization (300-600 nm) of cyclobutyl pyrimidine dimers (in cis-syn configuration), which are formed between adjacent bases on the same DNA strand upon exposure to ultraviolet radiation. This chain is Deoxyribodipyrimidine photo-lyase (PHR), found in Potorous tridactylus (Potoroo).